The chain runs to 67 residues: Conotoxin TxMMSK-01 (67 aa).

A signal peptide spans 1–20; that stretch reads MMSKLGVLLITCLLLFPLTA. A propeptide spanning residues 21 to 53 is cleaved from the precursor; that stretch reads VPLDGDQPADQPAERLQDDISSENHPFFDPVKR. Disulfide bonds link Cys-54–Cys-66, Cys-55–Cys-62, and Cys-59–Cys-65. Pro-64 bears the 4-hydroxyproline mark. A Cysteine amide modification is found at Cys-66.

Belongs to the conotoxin M superfamily. As to expression, expressed by the venom duct.

It localises to the secreted. This Conus textile (Cloth-of-gold cone) protein is Conotoxin TxMMSK-01.